A 96-amino-acid polypeptide reads, in one-letter code: Co-chaperonin GroES (96 aa).

It belongs to the GroES chaperonin family. Heptamer of 7 subunits arranged in a ring. Interacts with the chaperonin GroEL.

It is found in the cytoplasm. Functionally, together with the chaperonin GroEL, plays an essential role in assisting protein folding. The GroEL-GroES system forms a nano-cage that allows encapsulation of the non-native substrate proteins and provides a physical environment optimized to promote and accelerate protein folding. GroES binds to the apical surface of the GroEL ring, thereby capping the opening of the GroEL channel. This Actinobacillus pleuropneumoniae serotype 7 (strain AP76) protein is Co-chaperonin GroES.